The following is a 179-amino-acid chain: Large ribosomal subunit protein uL5 (179 aa).

It belongs to the universal ribosomal protein uL5 family. In terms of assembly, part of the 50S ribosomal subunit; part of the 5S rRNA/L5/L18/L25 subcomplex. Contacts the 5S rRNA and the P site tRNA. Forms a bridge to the 30S subunit in the 70S ribosome.

This is one of the proteins that bind and probably mediate the attachment of the 5S RNA into the large ribosomal subunit, where it forms part of the central protuberance. In the 70S ribosome it contacts protein S13 of the 30S subunit (bridge B1b), connecting the 2 subunits; this bridge is implicated in subunit movement. Contacts the P site tRNA; the 5S rRNA and some of its associated proteins might help stabilize positioning of ribosome-bound tRNAs. This chain is Large ribosomal subunit protein uL5, found in Synechococcus sp. (strain CC9311).